The chain runs to 185 residues: Bacteriocin UviA (185 aa).

In terms of biological role, may have a role in bacteriocin secretion or immunity. This chain is Bacteriocin UviA (uviA), found in Clostridium perfringens.